A 280-amino-acid chain; its full sequence is Pantothenate synthetase (280 aa).

30–37 (MGALHEGH) is a binding site for ATP. H37 (proton donor) is an active-site residue. Position 61 (Q61) interacts with (R)-pantoate. Q61 is a binding site for beta-alanine. An ATP-binding site is contributed by 147 to 150 (GQKD). Position 153 (Q153) interacts with (R)-pantoate. ATP-binding positions include V176 and 184 to 187 (MSSR).

Belongs to the pantothenate synthetase family. As to quaternary structure, homodimer.

It localises to the cytoplasm. It catalyses the reaction (R)-pantoate + beta-alanine + ATP = (R)-pantothenate + AMP + diphosphate + H(+). Its pathway is cofactor biosynthesis; (R)-pantothenate biosynthesis; (R)-pantothenate from (R)-pantoate and beta-alanine: step 1/1. Catalyzes the condensation of pantoate with beta-alanine in an ATP-dependent reaction via a pantoyl-adenylate intermediate. This Thermodesulfovibrio yellowstonii (strain ATCC 51303 / DSM 11347 / YP87) protein is Pantothenate synthetase.